The sequence spans 505 residues: MDASVSLLPEGESLHRSLSASQIQMLAFGGIIGTGLFLGIGSSLAESGPASLLISFSVLGVSVYCTMLALGEMSVYMPVAGSFCTYVGRYVDEALSFSLTWNYWLNDTIALASHVLATRLVVDFWLIPTEGDPVSASLSLPPWKEAVRIITPITSLSANIILNMLPVGGFGEIEYWLSSIKVFTVAAFIVNGILCNLGVNNEKKFIGFRYWKDPGAFNNGIIGVISSFVNAAFAYAGTESIALTAGEAKSPITTLPKAIRFTAHRVLLLYIISVLVVGINLPYNTPGLDGDSVRMSPFTFVFKKFGVPGAASIMNLVILSSALSAGNHSLYAGTRLLYSLAKSGHAPKVFSKCNKHGIPWLSVLATSATAILCLMSSQAGKTWGFLLNVIAVSNQISWIFIAVSSLRFRKALRVQGKTHRLYFPNWTYPVGPYIIILLNGVFLFLQGYKSLYPFRLSLFVSYYMEIPIVLGLYLIWKIYKKTKLVSSSEADLETDWKSLEDTDSA.

11 helical membrane-spanning segments follow: residues 25-45 (MLAF…SSLA), 50-70 (ASLL…MLAL), 149-169 (IITP…PVGG), 175-195 (YWLS…GILC), 221-241 (IIGV…TESI), 266-286 (VLLL…YNTP), 305-325 (FGVP…ALSA), 357-377 (GIPW…LMSS), 383-403 (WGFL…FIAV), 425-445 (NWTY…FLFL), and 456-476 (LSLF…YLIW).

The protein belongs to the amino acid-polyamine-organocation (APC) superfamily.

Its subcellular location is the membrane. The protein is Probable amino-acid permease PB1C11.02 of Schizosaccharomyces pombe (strain 972 / ATCC 24843) (Fission yeast).